A 99-amino-acid polypeptide reads, in one-letter code: Nucleoid-associated protein UPA3_0088 (99 aa).

This sequence belongs to the YbaB/EbfC family. As to quaternary structure, homodimer.

It is found in the cytoplasm. The protein localises to the nucleoid. Functionally, binds to DNA and alters its conformation. May be involved in regulation of gene expression, nucleoid organization and DNA protection. The sequence is that of Nucleoid-associated protein UPA3_0088 from Ureaplasma parvum serovar 3 (strain ATCC 27815 / 27 / NCTC 11736).